Consider the following 504-residue polypeptide: MPETKSSVSTLEQPETKPKKVGFVSLGCPKNLVDSEVMMGLLATNGAEITARAEDADIIVVNTCSFIDTAKQESVDTILEMAGHKATGRAQKLIVAGCLVERYRNEIQKNIPEVDAVVGTGELEAILAASGIEPRKSEANSPFVILNSTSASQQLKSGIADRPEGAAREEAGRFARTDWDGAVADLPNYLYDENTPRVLATPKYMAYIKVAEGCDHPCSFCIIPQLRGKFRSRRFESVVAEAERLAKQGVKEITLIGQDTTCYGEDLGLKDGLAQLLERLAQIEELQWVRFLYAYPNKITKRLLQTIADNPKIPKYMDVPLQHSAANVLKRMKRGAHGDIFLKSIEEMRRVIPDLTLRTSFIVGFPGETEEDFNQLCEFVKAAQIDWLGVFSYSDEEGAKAFALDEKVPPREIERRRKKLMSLQKQISKKKRKALIGREFDVILEGPSEETDLLWEGRTAMHAPEIDGKVYINDFAEHENVEPGQVFRCEITEAHDYDLVARLL.

The MTTase N-terminal domain maps to 19–135 (KKVGFVSLGC…ILAASGIEPR (117 aa)). Cysteine 28, cysteine 64, cysteine 98, cysteine 214, cysteine 218, and cysteine 221 together coordinate [4Fe-4S] cluster. One can recognise a Radical SAM core domain in the interval 200–430 (ATPKYMAYIK…MSLQKQISKK (231 aa)). A TRAM domain is found at 433–504 (KALIGREFDV…HDYDLVARLL (72 aa)).

This sequence belongs to the methylthiotransferase family. RimO subfamily. [4Fe-4S] cluster is required as a cofactor.

The protein localises to the cytoplasm. It catalyses the reaction L-aspartate(89)-[ribosomal protein uS12]-hydrogen + (sulfur carrier)-SH + AH2 + 2 S-adenosyl-L-methionine = 3-methylsulfanyl-L-aspartate(89)-[ribosomal protein uS12]-hydrogen + (sulfur carrier)-H + 5'-deoxyadenosine + L-methionine + A + S-adenosyl-L-homocysteine + 2 H(+). Its function is as follows. Catalyzes the methylthiolation of an aspartic acid residue of ribosomal protein uS12. In Koribacter versatilis (strain Ellin345), this protein is Ribosomal protein uS12 methylthiotransferase RimO.